The chain runs to 156 residues: Small ribosomal subunit protein uS7 (156 aa).

It belongs to the universal ribosomal protein uS7 family. In terms of assembly, part of the 30S ribosomal subunit. Contacts proteins S9 and S11.

In terms of biological role, one of the primary rRNA binding proteins, it binds directly to 16S rRNA where it nucleates assembly of the head domain of the 30S subunit. Is located at the subunit interface close to the decoding center, probably blocks exit of the E-site tRNA. The sequence is that of Small ribosomal subunit protein uS7 from Shewanella loihica (strain ATCC BAA-1088 / PV-4).